A 1084-amino-acid polypeptide reads, in one-letter code: Carbamoyl phosphate synthase large chain (1084 aa).

The interval 1 to 401 is carboxyphosphate synthetic domain; that stretch reads MPRRQDVEKV…ALLKAVRSLE (401 aa). Residues R129, R169, G175, G176, R208, L210, E215, G241, V242, H243, Q284, and E298 each coordinate ATP. One can recognise an ATP-grasp 1 domain in the interval 133–327; the sequence is RALMKEIGEP…IAKVAAKIAV (195 aa). Q284, E298, and N300 together coordinate Mg(2+). The Mn(2+) site is built by Q284, E298, and N300. The interval 402 to 546 is oligomerization domain; the sequence is TGRDGLFHPA…YSCYDEENEA (145 aa). A carbamoyl phosphate synthetic domain region spans residues 547–947; sequence VSPPGRKAVV…ALYKALLASG (401 aa). In terms of domain architecture, ATP-grasp 2 spans 672–862; that stretch reads DQLLSDLSIP…LAKVATQVIA (191 aa). ATP-binding residues include R708, R747, E753, G778, V779, H780, S781, Q821, and E833. Residues Q821, E833, and N835 each coordinate Mg(2+). The Mn(2+) site is built by Q821, E833, and N835. The MGS-like domain occupies 948 to 1084; it reads VRVPHRGTVL…VGISAVQDWV (137 aa). Positions 948–1084 are allosteric domain; sequence VRVPHRGTVL…VGISAVQDWV (137 aa).

This sequence belongs to the CarB family. As to quaternary structure, composed of two chains; the small (or glutamine) chain promotes the hydrolysis of glutamine to ammonia, which is used by the large (or ammonia) chain to synthesize carbamoyl phosphate. Tetramer of heterodimers (alpha,beta)4. Mg(2+) serves as cofactor. The cofactor is Mn(2+).

The catalysed reaction is hydrogencarbonate + L-glutamine + 2 ATP + H2O = carbamoyl phosphate + L-glutamate + 2 ADP + phosphate + 2 H(+). It catalyses the reaction hydrogencarbonate + NH4(+) + 2 ATP = carbamoyl phosphate + 2 ADP + phosphate + 2 H(+). Its pathway is amino-acid biosynthesis; L-arginine biosynthesis; carbamoyl phosphate from bicarbonate: step 1/1. It participates in pyrimidine metabolism; UMP biosynthesis via de novo pathway; (S)-dihydroorotate from bicarbonate: step 1/3. In terms of biological role, large subunit of the glutamine-dependent carbamoyl phosphate synthetase (CPSase). CPSase catalyzes the formation of carbamoyl phosphate from the ammonia moiety of glutamine, carbonate, and phosphate donated by ATP, constituting the first step of 2 biosynthetic pathways, one leading to arginine and/or urea and the other to pyrimidine nucleotides. The large subunit (synthetase) binds the substrates ammonia (free or transferred from glutamine from the small subunit), hydrogencarbonate and ATP and carries out an ATP-coupled ligase reaction, activating hydrogencarbonate by forming carboxy phosphate which reacts with ammonia to form carbamoyl phosphate. This Symbiobacterium thermophilum (strain DSM 24528 / JCM 14929 / IAM 14863 / T) protein is Carbamoyl phosphate synthase large chain.